A 294-amino-acid chain; its full sequence is Pyridoxal 5'-phosphate synthase subunit PdxS (294 aa).

D-ribose 5-phosphate is bound at residue D24. The Schiff-base intermediate with D-ribose 5-phosphate role is filled by K81. G153 is a D-ribose 5-phosphate binding site. R165 serves as a coordination point for D-glyceraldehyde 3-phosphate. Residues G214 and 235–236 (GS) each bind D-ribose 5-phosphate.

The protein belongs to the PdxS/SNZ family. As to quaternary structure, in the presence of PdxT, forms a dodecamer of heterodimers.

It carries out the reaction aldehydo-D-ribose 5-phosphate + D-glyceraldehyde 3-phosphate + L-glutamine = pyridoxal 5'-phosphate + L-glutamate + phosphate + 3 H2O + H(+). It participates in cofactor biosynthesis; pyridoxal 5'-phosphate biosynthesis. In terms of biological role, catalyzes the formation of pyridoxal 5'-phosphate from ribose 5-phosphate (RBP), glyceraldehyde 3-phosphate (G3P) and ammonia. The ammonia is provided by the PdxT subunit. Can also use ribulose 5-phosphate and dihydroxyacetone phosphate as substrates, resulting from enzyme-catalyzed isomerization of RBP and G3P, respectively. This Bacillus pumilus (strain SAFR-032) protein is Pyridoxal 5'-phosphate synthase subunit PdxS.